The primary structure comprises 796 residues: Histone-lysine N-methyltransferase PRDM9 (796 aa).

The segment at 1–23 (MSRTMNTNKPEENSTEGDAGKLE) is disordered. One can recognise a KRAB-related domain in the interval 27 to 90 (KVKDEFKDIS…QRQAIKPQIN (64 aa)). The disordered stretch occupies residues 149 to 172 (SEHAQKPVCSPEEGNTSGQHFGKK). Positions 209, 212, 220, and 223 each coordinate Zn(2+). The region spanning 248–362 (PGLRIGPSGI…PGRELLVWYG (115 aa)) is the SET domain. S-adenosyl-L-methionine is bound by residues 260-262 (AGL), Y295, and 324-325 (NC). 292 to 298 (NSGYSWL) is a binding site for substrate. Residue Y361 participates in substrate binding. K372 bears the N6,N6,N6-trimethyllysine; alternate mark. K372 is subject to N6-methyllysine; alternate. 2 positions are modified to N6-methyllysine: K376 and K378. Residues 392–415 (HPCFLCSLAFSSQKFLTQHVEWNH) form a C2H2-type 1 zinc finger. C394, C397, H410, and H415 together coordinate Zn(2+). Basic and acidic residues predominate over residues 443–457 (FDSQNKNDKASNEVK). Residues 443-497 (FDSQNKNDKASNEVKRKSKPRHKWTRQRISTAFSSTLKEQMRSEESKRTVEEELR) form a disordered region. Over residues 458–468 (RKSKPRHKWTR) the composition is skewed to basic residues. Residues 469-480 (QRISTAFSSTLK) are compositionally biased toward polar residues. A compositionally biased stretch (basic and acidic residues) spans 481 to 497 (EQMRSEESKRTVEEELR). The segment at 522–540 (QCGQCFSDKSNVSEHQRTH) adopts a C2H2-type 2; degenerate zinc-finger fold. C2H2-type zinc fingers lie at residues 546–568 (YICRECGRGFSQKSDLIKHQRTH), 574–596 (YICRECGRGFTQKSDLIKHQRTH), 602–624 (YICRECGRGFTQKSDLIKHQRTH), 630–652 (YICRECGRGFTQKSDLIKHQRTH), 658–680 (YICRECGRGFTQKSSLIRHQRTH), 686–708 (YICRECGLGFTQKSNLIRHLRTH), 714–736 (YICRECGLGFTRKSNLIQHQRTH), 742–764 (YICRECGQGLTWKSSLIQHQRTH), and 770–792 (YICRECGRGFTWKSSLIQHQRTH). Residues C716, C719, H732, H736, C744, C747, H760, H764, C772, C775, H788, and H792 each contribute to the Zn(2+) site.

It belongs to the class V-like SAM-binding methyltransferase superfamily. In terms of assembly, homodimer. Interacts with EHMT2 and CDYL; interaction only takes place when PRDM9 is bound to hotspot DNA. Interacts with CXXC1; this interaction does not link PRDM9-activated recombination hotspot sites with DSB machinery and is not required for the hotspot recognition pathway. Forms a complex with EWSR1, REC8, SYCP3 and SYCP1; complex formation is dependent of phosphorylated form of REC8 and requires PRDM9 bound to hotspot DNA; EWSR1 joins PRDM9 with the chromosomal axis through REC8. Mono-methylated; automethylated. Tri-methylated; automethylated. Mono-methylation is predominant; automethylation is lower and slower than H3 peptide methylation and is in a highest S-adenosyl-L-methionine concentration-dependent. There are two major sites for automethylation at Lys-372 and Lys-378. Lysines can be simultaneously methylated, such as Lys-372(me3)/Lys-376(me1), Lys-372(me1)/Lys-378(me1) and Lys-372(me1)/Lys-376(me1)/Lys-378(me1). Automethylation is an intramolecular (cis) process.

It is found in the nucleus. It localises to the chromosome. It carries out the reaction L-lysyl-[protein] + S-adenosyl-L-methionine = N(6)-methyl-L-lysyl-[protein] + S-adenosyl-L-homocysteine + H(+). It catalyses the reaction N(6)-methyl-L-lysyl-[protein] + S-adenosyl-L-methionine = N(6),N(6)-dimethyl-L-lysyl-[protein] + S-adenosyl-L-homocysteine + H(+). The enzyme catalyses L-lysyl(4)-[histone H3] + 3 S-adenosyl-L-methionine = N(6),N(6),N(6)-trimethyl-L-lysyl(4)-[histone H3] + 3 S-adenosyl-L-homocysteine + 3 H(+). The catalysed reaction is L-lysyl(36)-[histone H3] + 3 S-adenosyl-L-methionine = N(6),N(6),N(6)-trimethyl-L-lysyl(36)-[histone H3] + 3 S-adenosyl-L-homocysteine + 3 H(+). It carries out the reaction L-lysyl(9)-[histone H3] + 3 S-adenosyl-L-methionine = N(6),N(6),N(6)-trimethyl-L-lysyl(9)-[histone H3] + 3 S-adenosyl-L-homocysteine + 3 H(+). It catalyses the reaction L-lysyl(20)-[histone H4] + S-adenosyl-L-methionine = N(6)-methyl-L-lysyl(20)-[histone H4] + S-adenosyl-L-homocysteine + H(+). The enzyme catalyses N(6)-methyl-L-lysyl(20)-[histone H4] + S-adenosyl-L-methionine = N(6),N(6)-dimethyl-L-lysyl(20)-[histone H4] + S-adenosyl-L-homocysteine + H(+). Histone methyltransferase that sequentially mono-, di-, and tri-methylates both 'Lys-4' (H3K4) and 'Lys-36' (H3K36) of histone H3 to produce respectively trimethylated 'Lys-4' (H3K4me3) and trimethylated 'Lys-36' (H3K36me3) histone H3 and plays a key role in meiotic prophase by determining hotspot localization thereby promoting meiotic recombination. Can also methylate all four core histones with H3 being the best substrate and the most highly modified. Is also able, on one hand, to mono and di-methylate H4K20 and on other hand to trimethylate H3K9 with the di-methylated H3K9 as the best substrate. During meiotic prophase, binds specific DNA sequences through its zinc finger domains thereby determining hotspot localization where it promotes local H3K4me3 and H3K36me3 enrichment on the same nucleosomes through its histone methyltransferase activity. Thereby promotes double-stranded breaks (DSB) formation, at this subset of PRDM9-binding sites, that initiates meiotic recombination for the proper meiotic progression. During meiotic progression hotspot-bound PRDM9 interacts with several complexes; in early leptonema binds CDYL and EHMT2 followed by EWSR1 and CXXC1 by the end of leptonema. EWSR1 joins PRDM9 with the chromosomal axis through REC8. In this way, controls the DSB repair pathway, pairing of homologous chromosomes and sex body formation. Moreover plays a central role in the transcriptional activation of genes during early meiotic prophase thanks to H3K4me3 and H3K36me3 enrichment that represents a specific tag for epigenetic transcriptional activation. In addition performs automethylation. Acetylation and phosphorylation of histone H3 attenuate or prevent histone H3 methylation. The polypeptide is Histone-lysine N-methyltransferase PRDM9 (Rattus norvegicus (Rat)).